A 600-amino-acid polypeptide reads, in one-letter code: Kelch-like protein 24 (600 aa).

In terms of domain architecture, BTB spans 66 to 133 (TDVIICVEGK…VYTGKVKITT (68 aa)). Residues 168–270 (CLGIQRFADT…HPNYFVQTVE (103 aa)) enclose the BACK domain. Kelch repeat units follow at residues 314–363 (VIVV…ALRN), 365–407 (ILVS…VLLG), 408–454 (KVYV…SCVG), 456–502 (LFVI…SLNN), 504–544 (IYVA…VCNG), and 546–592 (IYIL…TIHR).

In terms of assembly, forms homodimers. Interacts with GRIK2. Component of the BCR(KLHL24) E3 ubiquitin ligase complex, composed of CUL3, RBX1 and KLHL24. Interacts with CUL3. Interacts with KRT14. Post-translationally, autoubiquitinated. Autoubiquitination leads to proteasomal degradation and is necessary to control KLHL24 levels. Expressed in the skin. Found in keratinocytes, dermal fibroblasts, and melanocytes. Basal-layer keratinocytes have lower KLHL24 expression than suprabasal keratinocytes. Expressed in the brain, spinal cord, liver, testis, heart and at higher levels in the skeletal muscle.

The protein localises to the perikaryon. It localises to the cell projection. It is found in the axon. Its subcellular location is the cytoplasm. The protein resides in the cell junction. The protein localises to the desmosome. It localises to the adherens junction. Its function is as follows. Necessary to maintain the balance between intermediate filament stability and degradation, a process that is essential for skin integrity. As part of the BCR(KLHL24) E3 ubiquitin ligase complex, mediates ubiquitination of KRT14 and controls its levels during keratinocytes differentiation. Specifically reduces kainate receptor-mediated currents in hippocampal neurons, most probably by modulating channel properties. Has a crucial role in cardiac development and function. This chain is Kelch-like protein 24 (KLHL24), found in Homo sapiens (Human).